We begin with the raw amino-acid sequence, 266 residues long: Tryptophan synthase alpha chain (266 aa).

Residues Glu49 and Asp60 each act as proton acceptor in the active site.

It belongs to the TrpA family. As to quaternary structure, tetramer of two alpha and two beta chains.

The catalysed reaction is (1S,2R)-1-C-(indol-3-yl)glycerol 3-phosphate + L-serine = D-glyceraldehyde 3-phosphate + L-tryptophan + H2O. Its pathway is amino-acid biosynthesis; L-tryptophan biosynthesis; L-tryptophan from chorismate: step 5/5. In terms of biological role, the alpha subunit is responsible for the aldol cleavage of indoleglycerol phosphate to indole and glyceraldehyde 3-phosphate. The sequence is that of Tryptophan synthase alpha chain from Chloroflexus aurantiacus (strain ATCC 29364 / DSM 637 / Y-400-fl).